Here is a 300-residue protein sequence, read N- to C-terminus: Probable low-salt glycan biosynthesis reductase Agl14 (300 aa).

Residues G10 to L12, D46 to I47, and A70 to T72 contribute to the NADH site. NADPH-binding positions include L11–L12, D46–I47, A70–T72, Y109, Y135, and K139. Y135 and K139 together coordinate NADH. Residue Y135 is the Proton donor/acceptor of the active site.

Belongs to the dTDP-4-dehydrorhamnose reductase family.

It participates in protein modification; protein glycosylation. It functions in the pathway cell surface structure biogenesis; S-layer biogenesis. Reductase involved in N-glycan biosynthetic pathway that takes place under low-salt conditions (1.75 M instead of 3.4 M). Participates in the formation of the tetrasaccharide present at 'Asn-532' of S-layer glycoprotein Csg, consisting of a sulfated hexose, 2 hexoses and rhamnose. Involved in the addition of final rhamnose (sugar 4) of the tetrasaccharide on the dolichol phosphate carrier. The protein is Probable low-salt glycan biosynthesis reductase Agl14 (agl14) of Haloferax volcanii (strain ATCC 29605 / DSM 3757 / JCM 8879 / NBRC 14742 / NCIMB 2012 / VKM B-1768 / DS2) (Halobacterium volcanii).